A 100-amino-acid chain; its full sequence is Aspartyl/glutamyl-tRNA(Asn/Gln) amidotransferase subunit C (100 aa).

It belongs to the GatC family. In terms of assembly, heterotrimer of A, B and C subunits.

The enzyme catalyses L-glutamyl-tRNA(Gln) + L-glutamine + ATP + H2O = L-glutaminyl-tRNA(Gln) + L-glutamate + ADP + phosphate + H(+). The catalysed reaction is L-aspartyl-tRNA(Asn) + L-glutamine + ATP + H2O = L-asparaginyl-tRNA(Asn) + L-glutamate + ADP + phosphate + 2 H(+). Its function is as follows. Allows the formation of correctly charged Asn-tRNA(Asn) or Gln-tRNA(Gln) through the transamidation of misacylated Asp-tRNA(Asn) or Glu-tRNA(Gln) in organisms which lack either or both of asparaginyl-tRNA or glutaminyl-tRNA synthetases. The reaction takes place in the presence of glutamine and ATP through an activated phospho-Asp-tRNA(Asn) or phospho-Glu-tRNA(Gln). The chain is Aspartyl/glutamyl-tRNA(Asn/Gln) amidotransferase subunit C from Corynebacterium aurimucosum (strain ATCC 700975 / DSM 44827 / CIP 107346 / CN-1) (Corynebacterium nigricans).